Consider the following 321-residue polypeptide: UPF0676 protein C1494.01 (321 aa).

In terms of domain architecture, Fe2OG dioxygenase spans 159-267 (EEDVLRLLKY…RQTIAYFVTP (109 aa)).

The protein belongs to the UPF0676 family.

The protein resides in the cytoplasm. It is found in the nucleus. The chain is UPF0676 protein C1494.01 from Schizosaccharomyces pombe (strain 972 / ATCC 24843) (Fission yeast).